The chain runs to 357 residues: Quinolinate synthase (357 aa).

Iminosuccinate contacts are provided by histidine 50 and serine 71. A [4Fe-4S] cluster-binding site is contributed by cysteine 116. Residues 142–144 (YAN) and serine 159 each bind iminosuccinate. Residue cysteine 203 coordinates [4Fe-4S] cluster. Iminosuccinate-binding positions include 229–231 (HPE) and threonine 246. A [4Fe-4S] cluster-binding site is contributed by cysteine 300.

It belongs to the quinolinate synthase family. Type 1 subfamily. [4Fe-4S] cluster is required as a cofactor.

It is found in the cytoplasm. It carries out the reaction iminosuccinate + dihydroxyacetone phosphate = quinolinate + phosphate + 2 H2O + H(+). Its pathway is cofactor biosynthesis; NAD(+) biosynthesis; quinolinate from iminoaspartate: step 1/1. Its function is as follows. Catalyzes the condensation of iminoaspartate with dihydroxyacetone phosphate to form quinolinate. This chain is Quinolinate synthase, found in Shewanella oneidensis (strain ATCC 700550 / JCM 31522 / CIP 106686 / LMG 19005 / NCIMB 14063 / MR-1).